A 118-amino-acid chain; its full sequence is Ribonuclease P protein component (118 aa).

This sequence belongs to the RnpA family. Consists of a catalytic RNA component (M1 or rnpB) and a protein subunit.

The enzyme catalyses Endonucleolytic cleavage of RNA, removing 5'-extranucleotides from tRNA precursor.. Functionally, RNaseP catalyzes the removal of the 5'-leader sequence from pre-tRNA to produce the mature 5'-terminus. It can also cleave other RNA substrates such as 4.5S RNA. The protein component plays an auxiliary but essential role in vivo by binding to the 5'-leader sequence and broadening the substrate specificity of the ribozyme. This chain is Ribonuclease P protein component, found in Shewanella frigidimarina (strain NCIMB 400).